Consider the following 351-residue polypeptide: Beta-hexosaminidase (351 aa).

Substrate-binding positions include Asp62, Arg70, Arg134, and 164-165; that span reads KH. His177 acts as the Proton donor/acceptor in catalysis. Asp249 functions as the Nucleophile in the catalytic mechanism.

This sequence belongs to the glycosyl hydrolase 3 family. NagZ subfamily. As to quaternary structure, monomer.

It localises to the cytoplasm. It catalyses the reaction Hydrolysis of terminal non-reducing N-acetyl-D-hexosamine residues in N-acetyl-beta-D-hexosaminides.. The protein operates within cell wall biogenesis; peptidoglycan recycling. Its function is as follows. Plays a role in peptidoglycan recycling by cleaving the terminal beta-1,4-linked N-acetylglucosamine (GlcNAc) from peptide-linked peptidoglycan fragments, giving rise to free GlcNAc, anhydro-N-acetylmuramic acid and anhydro-N-acetylmuramic acid-linked peptides. This is Beta-hexosaminidase from Pasteurella multocida (strain Pm70).